The primary structure comprises 147 residues: Sec-independent protein translocase protein TatB (147 aa).

The helical transmembrane segment at 2 to 22 (FDGIGFMELLLIGVLGLVVLG) threads the bilayer. Residues 85 to 97 (QLKQAAQSVNRPY) show a composition bias toward polar residues. Residues 85 to 147 (QLKQAAQSVN…DTRSNPKANG (63 aa)) form a disordered region. Residues 113-133 (ASQSVSTEASPSASSAPTSES) are compositionally biased toward low complexity.

This sequence belongs to the TatB family. The Tat system comprises two distinct complexes: a TatABC complex, containing multiple copies of TatA, TatB and TatC subunits, and a separate TatA complex, containing only TatA subunits. Substrates initially bind to the TatABC complex, which probably triggers association of the separate TatA complex to form the active translocon.

It is found in the cell inner membrane. Functionally, part of the twin-arginine translocation (Tat) system that transports large folded proteins containing a characteristic twin-arginine motif in their signal peptide across membranes. Together with TatC, TatB is part of a receptor directly interacting with Tat signal peptides. TatB may form an oligomeric binding site that transiently accommodates folded Tat precursor proteins before their translocation. The protein is Sec-independent protein translocase protein TatB of Shewanella sp. (strain ANA-3).